The following is a 194-amino-acid chain: Putative L,D-transpeptidase YciB (194 aa).

Positions 1 to 19 are cleaved as a signal peptide; that stretch reads MKLSLFIIAVLMPVILLSA. Cys20 is lipidated: N-palmitoyl cysteine. Cys20 carries the S-diacylglycerol cysteine lipid modification. Residues 68-194 enclose the L,D-TPase catalytic domain; that stretch reads VWIDVNVKEQ…IPEHTKVVIS (127 aa). Residue His144 is the Proton donor/acceptor of the active site. Cys170 (nucleophile) is an active-site residue.

This sequence belongs to the YkuD family.

It is found in the cell membrane. Its pathway is cell wall biogenesis; peptidoglycan biosynthesis. In Bacillus subtilis (strain 168), this protein is Putative L,D-transpeptidase YciB (yciB).